An 882-amino-acid chain; its full sequence is MNAPAKFSTSQIRSDFLAFFEGKGHTIVPSAPLVPGNDPTLLFTNSGMVQFKDVFLGAEKRSYVRAADVQRCLRAGGKHNDLDSVGYTARHHTFFEMLGNWSFGDYFKKDAIAWAWELLTQVWKLPADRLLVTVYHTDEEAFALWRDMIGIPESRIVRIGDNKGAPYASDNFWQMADTGPCGPCTEIFFDHGDHIAGGPPGSPDEDGDRFIEIWNLVFMQFDRQPDGTLVPLPAPCVDTGMGLERLAAILQHVHTNYEIDLFQALIGKASALTGITDLENKSLRVIADHIRACSFLIVDGVLPSNEGRGYVLRRIIRRALRHGWMLGVRQPFFSKMVPTLVELMGEAYPELVVAQDTVARALLAEEERFAETLDAGMKIFDEVASRSQDIIPGADAFRLYDTYGFPVDLTADIARERGMRVDMEGFEFAMERQRETARAAGKFGGGVALPADLVASMSPTVFLGYEAYDADALKVVALLKQGRPVERAEAGDEVIVFTDRTPFYAESGGQVGDSGQLSGPGVSINVTDTQKFAGQFHGHVGRISEGALALGDVLAGGIDTQRRGKTILNHSATHLLHAALREVLGTHVQQKGSLVAPDRLRFDFSHFQPFTADELAVIERKVNAEVRANHGVEVHNMAMQEALDFGAMALFGEKYGENVRVLKMGGYSTELCGGTHVTRTGDIGLFKITSEGGVSSGVRRIEAVTGQGALDYVADEERRLLEAANLLGGNTSEVVDKVRALTERQKRLERELESLKAKLASGATADLGASAIDVVGVKVVAVRLEGFDAKALRDAMDRLKQQLGDSVIVLAGASGGKVALVAGVNGSPTGKVKAGELLGHIASQIGGKGGGRPDLAQGGGEDGPALATALDGVPLWVKQHLG.

Zn(2+) contacts are provided by H570, H574, C672, and H676.

It belongs to the class-II aminoacyl-tRNA synthetase family. Zn(2+) serves as cofactor.

Its subcellular location is the cytoplasm. It carries out the reaction tRNA(Ala) + L-alanine + ATP = L-alanyl-tRNA(Ala) + AMP + diphosphate. In terms of biological role, catalyzes the attachment of alanine to tRNA(Ala) in a two-step reaction: alanine is first activated by ATP to form Ala-AMP and then transferred to the acceptor end of tRNA(Ala). Also edits incorrectly charged Ser-tRNA(Ala) and Gly-tRNA(Ala) via its editing domain. This chain is Alanine--tRNA ligase, found in Xanthomonas euvesicatoria pv. vesicatoria (strain 85-10) (Xanthomonas campestris pv. vesicatoria).